A 350-amino-acid polypeptide reads, in one-letter code: C5a anaphylatoxin chemotactic receptor 1 (350 aa).

The Extracellular segment spans residues 1–37 (MDSFNYTTPDYGHYDDKDTLDPNTPVDKTSNTLRVPD). Residues 10–18 (DYGHYDDKD) are required for CHIPS binding. Sulfotyrosine occurs at positions 11 and 14. Residues 21 to 30 (DPNTPVDKTS) are involved in C5a binding. Residues 38–64 (ILALVIFAVVFLVGVLGNALVVWVTAF) traverse the membrane as a helical segment. Topologically, residues 65–69 (EVKRT) are cytoplasmic. Residues 70-93 (INAIWFLNLAVADFLSCLALPILF) traverse the membrane as a helical segment. Residues 94–110 (TSIVQHHHWPFGGAACR) lie on the Extracellular side of the membrane. A disulfide bond links Cys-109 and Cys-188. The chain crosses the membrane as a helical span at residues 111 to 132 (ILPSLILLNMYASILLLATISA). The Cytoplasmic portion of the chain corresponds to 133–153 (DRFLLVFKPIWCQNFRGAGLA). A helical membrane pass occupies residues 154–174 (WIACAVAWGLALLLTIPSFLY). Residues 175–200 (RVVREEYFPPKVLCGVDYSHDKQRER) lie on the Extracellular side of the membrane. A helical transmembrane segment spans residues 201–226 (AVAVVRLVLGFLWPLLTLTICYTFIL). Residues 227–242 (LRTWSRRATRSTKTLK) are Cytoplasmic-facing. The chain crosses the membrane as a helical span at residues 243-265 (VVVAVVASFFIFWLPYQVTGIMM). The Extracellular segment spans residues 266 to 282 (SFLEPSSPTFLLLKKLD). A helical membrane pass occupies residues 283-303 (SLCVSFAYINCCINPIIYVVA). Residues 304 to 350 (GQGFQGRLRKSLPSLLRNVLTEESVVRESKSFTRSTVDTMAEKTQAV) are Cytoplasmic-facing. Phosphoserine occurs at positions 314, 317, 327, 332, 334, and 338.

The protein belongs to the G-protein coupled receptor 1 family. In terms of assembly, homodimer. May also form higher-order oligomers. Interacts (when phosphorylated) with ARRB1 and ARRB2; the interaction is associated with internalization of C5aR. Interacts (via N-terminal domain) with S.aureus chemotaxis inhibitory protein (CHIPS); the interaction blocks the receptor and may thus inhibit the immune response. Sulfation plays a critical role in the association of C5aR with C5a, but no significant role in the ability of the receptor to transduce a signal and mobilize calcium in response to a small peptide agonist. Sulfation at Tyr-14 is important for CHIPS binding. Post-translationally, phosphorylated on serine residues in response to C5a binding, resulting in internalization of the receptor and short-term desensitization to C5a.

The protein resides in the cell membrane. The protein localises to the cytoplasmic vesicle. In terms of biological role, receptor for the chemotactic and inflammatory peptide anaphylatoxin C5a. The ligand interacts with at least two sites on the receptor: a high-affinity site on the extracellular N-terminus, and a second site in the transmembrane region which activates downstream signaling events. Receptor activation stimulates chemotaxis, granule enzyme release, intracellular calcium release and superoxide anion production. This Gorilla gorilla gorilla (Western lowland gorilla) protein is C5a anaphylatoxin chemotactic receptor 1 (C5AR1).